The sequence spans 116 residues: Appetite-regulating hormone (116 aa).

The signal sequence occupies residues 1–23 (MPAPRTICSLLLLSMLWMDLAMA). The O-decanoyl serine; alternate moiety is linked to residue Ser26. The O-hexanoyl serine; alternate moiety is linked to residue Ser26. A lipid anchor (O-octanoyl serine; alternate) is attached at Ser26. Positions 29 to 67 (SPEHQKLQRKEPKKPSGRLKPRALEGQFDPDVGSQEEGA) are disordered. A compositionally biased stretch (basic and acidic residues) spans 31–42 (EHQKLQRKEPKK). The propeptide at 51 to 74 (ALEGQFDPDVGSQEEGAEDELEIR) is removed in mature form. The residue at position 97 (Leu97) is a Leucine amide. Residues 98–116 (GKFLQDILWEEAEETLADE) constitute a propeptide, removed in mature form.

It belongs to the motilin family. In terms of processing, O-octanoylated by GOAT/MBOAT4. O-octanoylation is essential for ghrelin activity. Post-translationally, amidation of Leu-97 is essential for obestatin activity.

It localises to the secreted. In terms of biological role, ghrelin is the ligand for growth hormone secretagogue receptor type 1 (GHSR). Induces the release of growth hormone from the pituitary. Has an appetite-stimulating effect, induces adiposity and stimulates gastric acid secretion. Involved in growth regulation. Its function is as follows. Obestatin may be the ligand for GPR39. May have an appetite-reducing effect resulting in decreased food intake. May reduce gastric emptying activity and jejunal motility. In Capra hircus (Goat), this protein is Appetite-regulating hormone (GHRL).